A 1108-amino-acid chain; its full sequence is Unconventional myosin-Ie (1108 aa).

Residues serine 19 to glutamate 692 form the Myosin motor domain. Position 112-119 (glycine 112–threonine 119) interacts with ATP. The interval proline 581–glutamate 591 is actin-binding. In terms of domain architecture, IQ spans tyrosine 695–aspartate 724. One can recognise a TH1 domain in the interval lysine 730–proline 922. The interval serine 919–valine 966 is disordered. Over residues arginine 933–asparagine 949 the composition is skewed to polar residues. Phosphoserine occurs at positions 980 and 1002. Residues alanine 993–valine 1053 form a disordered region. Positions arginine 999–glutamate 1013 are enriched in polar residues. Residues arginine 1035–glutamine 1052 are compositionally biased toward pro residues. An SH3 domain is found at proline 1051–isoleucine 1108.

It belongs to the TRAFAC class myosin-kinesin ATPase superfamily. Myosin family. In terms of assembly, interacts with CALM and F-actin. Interacts (via SH3 domain) with SYNJ1, DNM1 and DNM2. Interacts with ARL14EP. Interacts with CARMIL1. As to expression, expressed in the immune system. In the kidney, predominantly expressed in the glomerulus, including podocytes.

It is found in the cytoplasm. Its subcellular location is the cytoskeleton. It localises to the cytoplasmic vesicle. The protein localises to the clathrin-coated vesicle. The protein resides in the cell junction. Its function is as follows. Actin-based motor molecule with ATPase activity. Unconventional myosins serve in intracellular movements. Their highly divergent tails bind to membranous compartments, which are then moved relative to actin filaments. Binds to membranes containing anionic phospholipids via its tail domain. Involved in clathrin-mediated endocytosis and intracellular movement of clathrin-coated vesicles. Required for normal morphology of the glomerular basement membrane, normal development of foot processes by kidney podocytes and normal kidney function. In dendritic cells, may control the movement of class II-containing cytoplasmic vesicles along the actin cytoskeleton by connecting them with the actin network via ARL14EP and ARL14. This chain is Unconventional myosin-Ie (MYO1E), found in Homo sapiens (Human).